Reading from the N-terminus, the 201-residue chain is MSTIVDMVDVSLVDKCCWICKESCDVVRNYCKCRGDNKIVHKECLEEWINTDTVKNKSCAICETPYNVKQQYKKLTKWRCYRRDCHDSLLVNLPLCLIVGGISTYTLVSVEIIKLMESEETSELTKVFLVTSFLGPFIVTVLSALRTCIDCRTYFLTTRKRNTIHTLQELEDDDDDDDDDDDDDDEEYADAVEEIIIGPSN.

Residues 1-92 are Cytoplasmic-facing; that stretch reads MSTIVDMVDV…RDCHDSLLVN (92 aa). Residues 9–69 form an RING-CH-type zinc finger; it reads DVSLVDKCCW…AICETPYNVK (61 aa). Residues cysteine 17, cysteine 20, cysteine 31, cysteine 33, histidine 41, cysteine 44, cysteine 59, and cysteine 62 each contribute to the Zn(2+) site. The chain crosses the membrane as a helical span at residues 93–113; sequence LPLCLIVGGISTYTLVSVEII. Residues 114–123 lie on the Lumenal side of the membrane; it reads KLMESEETSE. Residues 124–144 form a helical membrane-spanning segment; the sequence is LTKVFLVTSFLGPFIVTVLSA. Residues 145-201 lie on the Cytoplasmic side of the membrane; it reads LRTCIDCRTYFLTTRKRNTIHTLQELEDDDDDDDDDDDDDDEEYADAVEEIIIGPSN. The interval 168-188 is disordered; that stretch reads QELEDDDDDDDDDDDDDDEEY. The span at 169-188 shows a compositional bias: acidic residues; it reads ELEDDDDDDDDDDDDDDEEY.

This sequence belongs to the poxviridae LAP protein family.

The protein resides in the host membrane. It is found in the host Golgi apparatus. It localises to the host trans-Golgi network membrane. The protein localises to the host early endosome membrane. The enzyme catalyses S-ubiquitinyl-[E2 ubiquitin-conjugating enzyme]-L-cysteine + [acceptor protein]-L-lysine = [E2 ubiquitin-conjugating enzyme]-L-cysteine + N(6)-ubiquitinyl-[acceptor protein]-L-lysine.. E3 ubiquitin-protein ligase which promotes ubiquitination and subsequent degradation of host MHC-I and CD4 molecules, presumably to prevent lysis of infected cells by cytotoxic T-lymphocytes and NK cell. Binds target molecules through transmembrane interaction. The result of this ubiquitination is the enhancement of the endocytosis of the target chain and the delivery to the lysosome, where it is proteolytically destroyed. The chain is E3 ubiquitin-protein ligase LAP from Oryctolagus cuniculus (Rabbit).